A 604-amino-acid polypeptide reads, in one-letter code: Integrin alpha-IIb (604 aa).

An FG-GAP repeat occupies 1 to 61; the sequence is QVLDSPFPTG…ASVQLLVQDS (61 aa). Residues 1-558 lie on the Extracellular side of the membrane; that stretch reads QVLDSPFPTG…TQLLRALEER (558 aa). 5 residues coordinate Ca(2+): Asp-22, Asp-24, Asn-26, Tyr-28, and Asp-30. Intrachain disulfides connect Cys-69-Cys-80 and Cys-86-Cys-141. Asn-166 carries N-linked (GlcNAc...) asparagine glycosylation. Intrachain disulfides connect Cys-198–Cys-204, Cys-270–Cys-283, Cys-422–Cys-486, and Cys-476–Cys-481. A glycan (N-linked (GlcNAc...) asparagine) is linked at Asn-276. Asn-527 carries an N-linked (GlcNAc...) asparagine glycan. The chain crosses the membrane as a helical span at residues 559-584; sequence AIPIWWVLVGVLGGLLLLTILVLAMW. Residues 585–604 lie on the Cytoplasmic side of the membrane; that stretch reads KVGFFKRNRPPLEEDDEEGE. Positions 587–591 match the GFFKR motif motif; that stretch reads GFFKR.

This sequence belongs to the integrin alpha chain family. In terms of assembly, heterodimer of an alpha and a beta subunit. The alpha subunit is composed of a heavy and a light chain linked by a disulfide bond. Alpha-IIb associates with beta-3. Directly interacts with RNF181. Interacts (via C-terminus cytoplasmic tail region) with CIB1; the interaction is direct and calcium-dependent. Interacts (via C-terminus cytoplasmic tail region) with CIB2, CIB3 and CIB4; the interactions are stabilized/increased in a calcium and magnesium-dependent manner. ITGA2B:ITGB3 interacts with PPIA/CYPA; the interaction is ROS and PPIase activity-dependent and is increased in the presence of thrombin. ITGA2B:ITGB3 interacts with SELP (via C-type lectin domain); the interaction mediates cell-cell interaction and adhesion.

Its subcellular location is the membrane. Functionally, integrin alpha-IIb/beta-3 is a receptor for fibronectin, fibrinogen, plasminogen, prothrombin, thrombospondin and vitronectin. It recognizes the sequence R-G-D in a wide array of ligands. It recognizes the sequence H-H-L-G-G-G-A-K-Q-A-G-D-V in fibrinogen gamma chain. Following activation integrin alpha-IIb/beta-3 brings about platelet/platelet interaction through binding of soluble fibrinogen. This step leads to rapid platelet aggregation which physically plugs ruptured endothelial cell surface. The chain is Integrin alpha-IIb (ITGA2B) from Papio cynocephalus (Yellow baboon).